The primary structure comprises 282 residues: 4-diphosphocytidyl-2-C-methyl-D-erythritol kinase (282 aa).

K12 is a catalytic residue. 95–105 (PMGGGIGGGSS) contributes to the ATP binding site. D137 is a catalytic residue.

It belongs to the GHMP kinase family. IspE subfamily.

The catalysed reaction is 4-CDP-2-C-methyl-D-erythritol + ATP = 4-CDP-2-C-methyl-D-erythritol 2-phosphate + ADP + H(+). It functions in the pathway isoprenoid biosynthesis; isopentenyl diphosphate biosynthesis via DXP pathway; isopentenyl diphosphate from 1-deoxy-D-xylulose 5-phosphate: step 3/6. In terms of biological role, catalyzes the phosphorylation of the position 2 hydroxy group of 4-diphosphocytidyl-2C-methyl-D-erythritol. The polypeptide is 4-diphosphocytidyl-2-C-methyl-D-erythritol kinase (Pseudomonas aeruginosa (strain LESB58)).